Consider the following 301-residue polypeptide: MADQLIRATAADGGIRAVGVITTRLTEEARQRHKLSYVATAALGRTMAAGLLMASGMKRVGSRVNVRVKGDGPLAGILVDAGLDGTVRGYVGNPHIELPPNAKGKLDVGGAVGNGYLYVVRDIGYGYPYSSTVELVSGEIGDDVAHYLVTSEQTPSALMLGVFVGASGVTAAGGLLVQVLPKAARDEALVAKLESRVGALSGFTPLLQAGKTLPEIFHDLLGDMGLTIFPESQILRFHCGCSFDRVLGALKMLGEAELQDMIVKDDGAEATCDFCGRVYQASSEHLAQLIVDLQTESSVSG.

2 cysteine pairs are disulfide-bonded: cysteine 239/cysteine 241 and cysteine 272/cysteine 275.

It belongs to the HSP33 family. Post-translationally, under oxidizing conditions two disulfide bonds are formed involving the reactive cysteines. Under reducing conditions zinc is bound to the reactive cysteines and the protein is inactive.

It is found in the cytoplasm. In terms of biological role, redox regulated molecular chaperone. Protects both thermally unfolding and oxidatively damaged proteins from irreversible aggregation. Plays an important role in the bacterial defense system toward oxidative stress. This chain is 33 kDa chaperonin, found in Nostoc sp. (strain PCC 7120 / SAG 25.82 / UTEX 2576).